A 177-amino-acid chain; its full sequence is Large ribosomal subunit protein uL6 (177 aa).

Residues 151 to 177 form a disordered region; sequence YRPPEPYKGKGIRYSDEHVVRKEAKKK. Basic and acidic residues predominate over residues 155 to 177; sequence EPYKGKGIRYSDEHVVRKEAKKK.

Belongs to the universal ribosomal protein uL6 family. Part of the 50S ribosomal subunit.

This protein binds to the 23S rRNA, and is important in its secondary structure. It is located near the subunit interface in the base of the L7/L12 stalk, and near the tRNA binding site of the peptidyltransferase center. In Psychrobacter sp. (strain PRwf-1), this protein is Large ribosomal subunit protein uL6.